Reading from the N-terminus, the 599-residue chain is MHRYRSHTCGELRASDVGTDVRLSGWLHNRRDLGGILFIDLRDHYGLVQLVARPGTPGNDALAKLTKETVVRIDGKVSARGADNVNPELPTGEIEIEVTEVEVLGEAGPLPFTINTEDGVNEERRLEYRFLDLRRERMHRNIMLRSAVIASIRSKMVALGFNEMATPILTATSPEGARDFVVPSRLNPGKFYALPQAPQQFKQLLMISGFDRYFQIAPCFRDEDARADRSPGEFYQLDVEMSFVEQEDVFQPIEKLMTELFTEFGNGREVTSPFPRIPFRESMLKYGNDKPDLRAKLELVDISDVFADSGFKAFAGKHVRALPVPDTAGQSRKFFDGLGEYAVEHGAKGLAWVRVGEDGTLAGPIAKFLTETDVKTLTERLSLVPGHAVFFGAGEFDEVSKIMSAVRVEAAKRAGHFEEGVFRFCWIVDFPMYEKDEETGKIDFSHNPFSMPQGGLADLEEKDPLDILAWQYDIVCNGIELSSGAIRNHEPELMLKAFEIAGYDRETVEHEFAGMLRAFRLGAPPHGGIAPGVDRIVMLLADEPNIRETIAFPLNGNAQDLMMGAPTELDESRLRELNIQLRKPVAAKGANAPEKTAEK.

Position 175 (Glu-175) interacts with L-aspartate. The segment at 199-202 is aspartate; the sequence is QQFK. Positions 221 and 446 each coordinate L-aspartate. 221-223 contributes to the ATP binding site; it reads RDE. Glu-480 is an ATP binding site. Arg-487 is an L-aspartate binding site. Position 532–535 (532–535) interacts with ATP; that stretch reads GVDR.

The protein belongs to the class-II aminoacyl-tRNA synthetase family. Type 1 subfamily. Homodimer.

It is found in the cytoplasm. It catalyses the reaction tRNA(Asp) + L-aspartate + ATP = L-aspartyl-tRNA(Asp) + AMP + diphosphate. Catalyzes the attachment of L-aspartate to tRNA(Asp) in a two-step reaction: L-aspartate is first activated by ATP to form Asp-AMP and then transferred to the acceptor end of tRNA(Asp). The protein is Aspartate--tRNA ligase of Streptomyces griseus subsp. griseus (strain JCM 4626 / CBS 651.72 / NBRC 13350 / KCC S-0626 / ISP 5235).